A 486-amino-acid polypeptide reads, in one-letter code: Nuclear distribution protein PAC1 (486 aa).

A coiled-coil region spans residues 66-99 (STVLRLQKKIIDLENEISNLNNIINSTNSDNNGI). WD repeat units lie at residues 119–158 (QCEN…NTIP), 164–205 (AHTR…RTLN), 206–246 (GHEH…SLKS), 249–291 (GHSE…GVAM), 294–328 (GHSH…FPTI), 329–368 (PLEL…IAPH), 389–428 (GHSS…ETGY), and 437–483 (GHDG…NSIK).

The protein belongs to the WD repeat LIS1/nudF family. In terms of assembly, self-associates. Interacts with NDL1 and dynein.

It localises to the cytoplasm. It is found in the cytoskeleton. The protein resides in the spindle pole. Functionally, positively regulates the activity of the minus-end directed microtubule motor protein dynein. Plays a central role in positioning the mitotic spindle at the bud neck during cell division. Targets cytoplasmic dynein to microtubule plus ends, thereby promoting dynein-mediated microtubule sliding along the bud cortex and consequently the movement of the mitotic spindle to the bud neck. This Candida albicans (strain SC5314 / ATCC MYA-2876) (Yeast) protein is Nuclear distribution protein PAC1.